A 385-amino-acid chain; its full sequence is Succinate--CoA ligase [ADP-forming] subunit beta (385 aa).

In terms of domain architecture, ATP-grasp spans 9–243; that stretch reads KEILSAYGIP…YSQLDTLEIN (235 aa). ATP contacts are provided by residues Lys-45, 52–54, Glu-98, Val-101, and Glu-106; that span reads GRG. Positions 198 and 212 each coordinate Mg(2+). Substrate is bound by residues Asn-263 and 320-322; that span reads GIM.

Belongs to the succinate/malate CoA ligase beta subunit family. Heterotetramer of two alpha and two beta subunits. Requires Mg(2+) as cofactor.

The catalysed reaction is succinate + ATP + CoA = succinyl-CoA + ADP + phosphate. It catalyses the reaction GTP + succinate + CoA = succinyl-CoA + GDP + phosphate. The protein operates within carbohydrate metabolism; tricarboxylic acid cycle; succinate from succinyl-CoA (ligase route): step 1/1. In terms of biological role, succinyl-CoA synthetase functions in the citric acid cycle (TCA), coupling the hydrolysis of succinyl-CoA to the synthesis of either ATP or GTP and thus represents the only step of substrate-level phosphorylation in the TCA. The beta subunit provides nucleotide specificity of the enzyme and binds the substrate succinate, while the binding sites for coenzyme A and phosphate are found in the alpha subunit. The sequence is that of Succinate--CoA ligase [ADP-forming] subunit beta from Geobacter sulfurreducens (strain ATCC 51573 / DSM 12127 / PCA).